Reading from the N-terminus, the 103-residue chain is Large ribosomal subunit protein bL21 (103 aa).

Belongs to the bacterial ribosomal protein bL21 family. Part of the 50S ribosomal subunit. Contacts protein L20.

This protein binds to 23S rRNA in the presence of protein L20. The sequence is that of Large ribosomal subunit protein bL21 from Haemophilus influenzae (strain PittEE).